The following is a 327-amino-acid chain: Malate dehydrogenase (327 aa).

11-17 contacts NAD(+); sequence GAAGQIG. Residues Arg92 and Arg98 each contribute to the substrate site. NAD(+) contacts are provided by residues Asn105, Gln112, and 129-131; that span reads VGN. Substrate is bound by residues Asn131 and Arg162. The Proton acceptor role is filled by His187.

Belongs to the LDH/MDH superfamily. MDH type 2 family.

The enzyme catalyses (S)-malate + NAD(+) = oxaloacetate + NADH + H(+). In terms of biological role, catalyzes the reversible oxidation of malate to oxaloacetate. This is Malate dehydrogenase from Thermus thermophilus (strain ATCC BAA-163 / DSM 7039 / HB27).